The sequence spans 1756 residues: Transposon Ty1-PR2 Gag-Pol polyprotein (1756 aa).

Composition is skewed to polar residues over residues 1-10, 48-60, and 127-152; these read MESQQLSNYP, TKAN…TPAS, and QSQF…GNTF. 3 disordered regions span residues 1–93, 126–173, and 352–421; these read MESQ…MMTQ, PQSQ…RPPP, and GSRN…SKST. Residues 153–165 are compositionally biased toward low complexity; that stretch reads TDSSSADSDMTST. The tract at residues 299 to 401 is RNA-binding; the sequence is NNGIHINNKV…NSKSKTARAH (103 aa). Residues 402–418 are compositionally biased toward low complexity; the sequence is NVSTSNNSPSTDNDSIS. D461 serves as the catalytic For protease activity; shared with dimeric partner. An integrase-type zinc finger-like region spans residues 583–640; it reads NVHTSESTRKYPYPFIHRMLAHANAQTIRYSLKNNTITYFNESDVDWSSAIDYQCPDC. Residues 660-836 enclose the Integrase catalytic domain; sequence NSYEPFQYLH…AGLDISTLLP (177 aa). 2 residues coordinate Mg(2+): D671 and D736. Disordered regions lie at residues 957 to 1088, 1093 to 1112, and 1131 to 1188; these read SKAV…ETEK, RSPS…NIVP, and DLPL…DNET. The span at 961 to 970 shows a compositional bias: low complexity; that stretch reads SPTDSTPPST. Polar residues predominate over residues 1006–1016; the sequence is STPQISNIEST. Basic and acidic residues predominate over residues 1039–1054; sequence ESSHASKSKDFRHSDS. Polar residues-rich tracts occupy residues 1055-1083 and 1102-1112; these read YSEN…QISD and PENNSSHNIVP. The short motif at 1179–1213 is the Bipartite nuclear localization signal element; sequence KKRSLEDNETEIKVSRDTWNTKNMRSLEPPRSKKR. Residues 1339 to 1477 form the Reverse transcriptase Ty1/copia-type domain; sequence NNYYITQLDI…DILGLEIKYQ (139 aa). Residues D1347, D1428, D1429, D1611, E1653, and D1686 each contribute to the Mg(2+) site. One can recognise an RNase H Ty1/copia-type domain in the interval 1611 to 1753; sequence DASYGNQPYY…IKTFKLLTNK (143 aa).

In terms of assembly, the capsid protein forms a homotrimer, from which the VLPs are assembled. The protease is a homodimer, whose active site consists of two apposed aspartic acid residues. In terms of processing, initially, virus-like particles (VLPs) are composed of the structural unprocessed proteins Gag and Gag-Pol, and also contain the host initiator methionine tRNA (tRNA(i)-Met) which serves as a primer for minus-strand DNA synthesis, and a dimer of genomic Ty RNA. Processing of the polyproteins occurs within the particle and proceeds by an ordered pathway, called maturation. First, the protease (PR) is released by autocatalytic cleavage of the Gag-Pol polyprotein yielding capsid protein p45 and a Pol-p154 precursor protein. This cleavage is a prerequisite for subsequent processing of Pol-p154 at the remaining sites to release the mature structural and catalytic proteins. Maturation takes place prior to the RT reaction and is required to produce transposition-competent VLPs.

The protein localises to the cytoplasm. It localises to the nucleus. It carries out the reaction DNA(n) + a 2'-deoxyribonucleoside 5'-triphosphate = DNA(n+1) + diphosphate. It catalyses the reaction Endonucleolytic cleavage to 5'-phosphomonoester.. In terms of biological role, capsid protein (CA) is the structural component of the virus-like particle (VLP), forming the shell that encapsulates the retrotransposons dimeric RNA genome. The particles are assembled from trimer-clustered units and there are holes in the capsid shells that allow for the diffusion of macromolecules. CA also has nucleocapsid-like chaperone activity, promoting primer tRNA(i)-Met annealing to the multipartite primer-binding site (PBS), dimerization of Ty1 RNA and initiation of reverse transcription. Functionally, the aspartyl protease (PR) mediates the proteolytic cleavages of the Gag and Gag-Pol polyproteins after assembly of the VLP. Its function is as follows. Reverse transcriptase/ribonuclease H (RT) is a multifunctional enzyme that catalyzes the conversion of the retro-elements RNA genome into dsDNA within the VLP. The enzyme displays a DNA polymerase activity that can copy either DNA or RNA templates, and a ribonuclease H (RNase H) activity that cleaves the RNA strand of RNA-DNA heteroduplexes during plus-strand synthesis and hydrolyzes RNA primers. The conversion leads to a linear dsDNA copy of the retrotransposon that includes long terminal repeats (LTRs) at both ends. Integrase (IN) targets the VLP to the nucleus, where a subparticle preintegration complex (PIC) containing at least integrase and the newly synthesized dsDNA copy of the retrotransposon must transit the nuclear membrane. Once in the nucleus, integrase performs the integration of the dsDNA into the host genome. This is Transposon Ty1-PR2 Gag-Pol polyprotein (TY1B-PR2) from Saccharomyces cerevisiae (strain ATCC 204508 / S288c) (Baker's yeast).